The sequence spans 2089 residues: Rho GTPase-activating protein 32 (2089 aa).

Residues 24–52 form a disordered region; that stretch reads TQLTDGDEEEREESFRKMKSSIHSEEDDF. The 115-residue stretch at 131–245 folds into the PX; atypical domain; the sequence is GSIQLSLSEE…LTWMEIDNKG (115 aa). The 63-residue stretch at 259-321 folds into the SH3 domain; it reads PAVGAAHVIK…PGHCVELINQ (63 aa). Positions 372 to 567 constitute a Rho-GAP domain; the sequence is CDLGEHLLNS…FILNHVDVLF (196 aa). Phosphoserine is present on residues S706, S709, S732, and S738. Over residues 828–837 the composition is skewed to basic and acidic residues; sequence KLSPSKKDAE. The interval 828 to 858 is disordered; the sequence is KLSPSKKDAEAGGSQSQTPGSTASSEPVSPV. Residues 840–854 show a composition bias toward polar residues; that stretch reads GSQSQTPGSTASSEP. Phosphoserine occurs at positions 852, 856, 892, and 952. Disordered stretches follow at residues 955–1037, 1119–1141, and 1154–1197; these read QLQL…PPPP, CNQP…TDSG, and LHRN…SVST. 2 stretches are compositionally biased toward polar residues: residues 998–1014 and 1132–1141; these read LSSQ…QTGA and PTQSNTTDSG. The span at 1175 to 1191 shows a compositional bias: basic and acidic residues; that stretch reads DSEKSDDHGSFPEDHAG. S1206 bears the Phosphoserine mark. Residues 1221–1368 form a disordered region; the sequence is GTSVDKPHHS…GDPAPIFLSD (148 aa). Positions 1225–1235 are enriched in basic and acidic residues; sequence DKPHHSSELTD. Residues 1262–1275 show a composition bias toward low complexity; the sequence is TATMAYMMATPARA. Residues 1395–1714 form an interaction with GAB2 region; the sequence is RAPPLHLRAE…YNYAGLPPRP (320 aa). 2 positions are modified to asymmetric dimethylarginine: R1526 and R1536. S1588 bears the Phosphoserine mark. An interaction with FYN region spans residues 1688-2089; sequence SSRDFAFYNP…PHPDTQIHAE (402 aa). 2 disordered regions span residues 1801–1865 and 1881–2002; these read PGKT…QSSL and RAHQ…LERD. Residues 1826 to 1841 are compositionally biased toward basic and acidic residues; that stretch reads GDERFYRKHPESEFDR. Residues 1850 to 1865 show a composition bias toward polar residues; the sequence is STQAEKPSLPQKQSSL. Over residues 1881-1892 the composition is skewed to basic and acidic residues; sequence RAHQEASHRQLC. Residues 1918 to 1939 are compositionally biased toward polar residues; it reads SEPSNYHNSGKYMTSGQGSLTL. 2 stretches are compositionally biased toward basic and acidic residues: residues 1940–1954 and 1961–1975; these read NHKE…DRPR and PEKH…EEHF. R2039 carries the omega-N-methylarginine modification.

This sequence belongs to the PX domain-containing GAP family. Interacts with NTRK1 (via cytoplasmic domain); the interaction is independent of the phosphorylation state of NTRK1. Interacts with SHC3 (via SH2 domain). Interacts with RASA1 (via SH3 domain); the interaction is necessary for the Ras activation and cell transforming activities of ARHGAP32. Interacts with GAB1 and GAB2. Interacts with CRK and CRKL. Found in a complex with CRKL and BCAR1; upon EGF stimulation BCAR1 may be replaced by EGFR. Interacts with NCK1 (via SH3 domain); NCK1 recruits phosphorylated BCAR1 to the complex. Isoform 2 interacts with FYN; the interaction appears to be dependent on tyrosine phosphorylation of ARHGAP32. Interacts with EGFR; the interaction requires EGF stimulation and is increased by SHC3. Interacts with CDC42; the interaction requires constitutively active CDC42. Interacts with CTNNB1, DLG4, CDH2 and GRIN2B. Interacts with GPHN. Isoform 2 is phosphorylated on multiple tyrosine residues by FYN. Phosphorylated tyrosine residues undergo dephosphorylation after stimulation of NMDA receptors. Phosphorylated in vitro by CaMK2 in the presence of calmodulin and calcium; which inhibits GAP activity. As to expression, isoform 1 and isoform 2 are highly expressed in brain, specially in cortex, corpus striatum, hippocampus and thalamus. Low levels in cerebellum, colon, small intestine, and kidney.

Its subcellular location is the postsynaptic density. The protein resides in the cell projection. It is found in the dendritic spine. It localises to the cytoplasm. The protein localises to the cell cortex. Its subcellular location is the endosome membrane. The protein resides in the golgi apparatus membrane. It is found in the endoplasmic reticulum membrane. It localises to the membrane. Functionally, GTPase-activating protein (GAP) promoting GTP hydrolysis on RHOA, CDC42 and RAC1 small GTPases. May be involved in the differentiation of neuronal cells during the formation of neurite extensions. Involved in NMDA receptor activity-dependent actin reorganization in dendritic spines. May mediate cross-talks between Ras- and Rho-regulated signaling pathways in cell growth regulation. Isoform 2 has higher GAP activity. The sequence is that of Rho GTPase-activating protein 32 (Arhgap32) from Mus musculus (Mouse).